The following is a 239-amino-acid chain: Uridylate kinase (239 aa).

ATP is bound at residue 10 to 13 (KISG). Residues 18–23 (GEAGFG) form an involved in allosteric activation by GTP region. G52 serves as a coordination point for UMP. ATP-binding residues include G53 and R57. Residues D72 and 133 to 140 (TGNPYFST) each bind UMP. N161, Y167, and D170 together coordinate ATP.

Belongs to the UMP kinase family. As to quaternary structure, homohexamer.

It localises to the cytoplasm. It catalyses the reaction UMP + ATP = UDP + ADP. Its pathway is pyrimidine metabolism; CTP biosynthesis via de novo pathway; UDP from UMP (UMPK route): step 1/1. Its activity is regulated as follows. Allosterically activated by GTP. Inhibited by UTP. In terms of biological role, catalyzes the reversible phosphorylation of UMP to UDP. The chain is Uridylate kinase from Lacticaseibacillus paracasei (strain ATCC 334 / BCRC 17002 / CCUG 31169 / CIP 107868 / KCTC 3260 / NRRL B-441) (Lactobacillus paracasei).